The chain runs to 154 residues: Large ribosomal subunit protein uL13 (154 aa).

Belongs to the universal ribosomal protein uL13 family. Part of the 50S ribosomal subunit.

Functionally, this protein is one of the early assembly proteins of the 50S ribosomal subunit, although it is not seen to bind rRNA by itself. It is important during the early stages of 50S assembly. This chain is Large ribosomal subunit protein uL13, found in Rhizobium etli (strain CIAT 652).